Consider the following 260-residue polypeptide: (R)-2-hydroxyglutaryl-CoA dehydratase activating ATPase (260 aa).

Residue 12 to 16 participates in ATP binding; the sequence is STASK. [4Fe-4S] cluster-binding residues include cysteine 127 and cysteine 166. Residues glutamine 220 and glutamine 243 each contribute to the ATP site.

The protein belongs to the HgdC family. As to quaternary structure, homodimer. Requires [4Fe-4S] cluster as cofactor. Mg(2+) serves as cofactor.

The enzyme catalyses ATP + H2O = ADP + phosphate + H(+). Its pathway is amino-acid degradation; L-glutamate degradation via hydroxyglutarate pathway; crotonoyl-CoA from L-glutamate: step 4/5. Its activity is regulated as follows. Inactivated by exposure to air within less than 15 minutes. Functionally, involved in the fermentation of L-glutamate via the hydroxyglutarate pathway. HgdC (CompA) has a very low ATPase activity, whose the role is to activate dehydratase HgdA-HgdB complex and then maintain an appropriate redox state via an ATP-dependent electron transfer. The dehydratase requires only catalytic amounts of ATP and substoichiometric amounts of HgdC (CompA) to be functional. The protein is (R)-2-hydroxyglutaryl-CoA dehydratase activating ATPase of Acidaminococcus fermentans (strain ATCC 25085 / DSM 20731 / CCUG 9996 / CIP 106432 / VR4).